Here is a 225-residue protein sequence, read N- to C-terminus: Cytochrome c oxidase subunit 2 (225 aa).

The Mitochondrial intermembrane segment spans residues Met1 to Asn25. A helical membrane pass occupies residues Leu26–Met47. The Mitochondrial matrix segment spans residues Asn48–Glu62. Residues Ile63–Lys82 form a helical membrane-spanning segment. At Ile83–Asn225 the chain is on the mitochondrial intermembrane side. Positions 159, 194, 196, 198, 202, and 205 each coordinate Cu cation. Mg(2+) is bound at residue Glu196.

Belongs to the cytochrome c oxidase subunit 2 family. Component of the cytochrome c oxidase (complex IV, CIV), a multisubunit enzyme composed of a catalytic core of 3 subunits and several supernumerary subunits. The complex exists as a monomer or a dimer and forms supercomplexes (SCs) in the inner mitochondrial membrane with ubiquinol-cytochrome c oxidoreductase (cytochrome b-c1 complex, complex III, CIII). It depends on Cu cation as a cofactor.

The protein localises to the mitochondrion inner membrane. It carries out the reaction 4 Fe(II)-[cytochrome c] + O2 + 8 H(+)(in) = 4 Fe(III)-[cytochrome c] + 2 H2O + 4 H(+)(out). Functionally, component of the cytochrome c oxidase, the last enzyme in the mitochondrial electron transport chain which drives oxidative phosphorylation. The respiratory chain contains 3 multisubunit complexes succinate dehydrogenase (complex II, CII), ubiquinol-cytochrome c oxidoreductase (cytochrome b-c1 complex, complex III, CIII) and cytochrome c oxidase (complex IV, CIV), that cooperate to transfer electrons derived from NADH and succinate to molecular oxygen, creating an electrochemical gradient over the inner membrane that drives transmembrane transport and the ATP synthase. Cytochrome c oxidase is the component of the respiratory chain that catalyzes the reduction of oxygen to water. Electrons originating from reduced cytochrome c in the intermembrane space (IMS) are transferred via the dinuclear copper A center (CU(A)) of subunit 2 and heme A of subunit 1 to the active site in subunit 1, a binuclear center (BNC) formed by heme A3 and copper B (CU(B)). The BNC reduces molecular oxygen to 2 water molecules using 4 electrons from cytochrome c in the IMS and 4 protons from the mitochondrial matrix. This Apis koschevnikovi (Koschevnikov's honey bee) protein is Cytochrome c oxidase subunit 2 (COII).